Reading from the N-terminus, the 1216-residue chain is Probable cation-transporting ATPase 13A5 (1216 aa).

5 helical membrane-spanning segments follow: residues 33-53, 198-218, 222-242, 401-421, and 433-453; these read RALC…MFYW, LLVK…LTLW, GYIE…VLSV, FMVF…GVYM, and MALI…LTIG. D486 (4-aspartylphosphate intermediate) is an active-site residue. Residues N650 and N817 are each glycosylated (N-linked (GlcNAc...) asparagine). Mg(2+)-binding residues include D848 and D852. Transmembrane regions (helical) follow at residues 896–916, 933–950, 971–991, 1040–1060, 1075–1095, and 1113–1133; these read ALVS…IQFI, YLLQ…TMSI, LLLS…CTFL, FEGT…AFIF, LFSL…FCDF, and VSIL…EDAV.

It belongs to the cation transport ATPase (P-type) (TC 3.A.3) family. Type V subfamily. In terms of tissue distribution, specifically expressed in brain and stomach.

It localises to the membrane. The catalysed reaction is ATP + H2O = ADP + phosphate + H(+). This is Probable cation-transporting ATPase 13A5 (Atp13a5) from Mus musculus (Mouse).